The primary structure comprises 383 residues: ATP phosphoribosyltransferase regulatory subunit (383 aa).

Belongs to the class-II aminoacyl-tRNA synthetase family. HisZ subfamily. As to quaternary structure, heteromultimer composed of HisG and HisZ subunits.

Its subcellular location is the cytoplasm. The protein operates within amino-acid biosynthesis; L-histidine biosynthesis; L-histidine from 5-phospho-alpha-D-ribose 1-diphosphate: step 1/9. Required for the first step of histidine biosynthesis. May allow the feedback regulation of ATP phosphoribosyltransferase activity by histidine. The chain is ATP phosphoribosyltransferase regulatory subunit from Cupriavidus metallidurans (strain ATCC 43123 / DSM 2839 / NBRC 102507 / CH34) (Ralstonia metallidurans).